Reading from the N-terminus, the 503-residue chain is Transcription termination/antitermination protein NusA (503 aa).

The region spanning 139–203 is the S1 motif domain; the sequence is GDIINGIVKR…KGPQIFLSRV (65 aa). In terms of domain architecture, KH spans 308–378; sequence SHKVEVVVSQ…LDVEEVIGQL (71 aa).

This sequence belongs to the NusA family. In terms of assembly, monomer. Binds directly to the core enzyme of the DNA-dependent RNA polymerase and to nascent RNA.

The protein localises to the cytoplasm. In terms of biological role, participates in both transcription termination and antitermination. In Rickettsia prowazekii (strain Madrid E), this protein is Transcription termination/antitermination protein NusA.